Consider the following 112-residue polypeptide: MSGKIKVTFIVNDGEEKTVEAPIGLSILEITHSNDLDLEGACEGSLACATCHVILEEEFYNKLKKPTEAEEDMLDLAFGLTDTSRLGCQIILTEELDGIKVRLPSATRNIKL.

The 2Fe-2S ferredoxin-type domain occupies 5–107; sequence IKVTFIVNDG…GIKVRLPSAT (103 aa). Residues cysteine 42, cysteine 48, cysteine 51, and cysteine 88 each contribute to the [2Fe-2S] cluster site.

It belongs to the adrenodoxin/putidaredoxin family. It depends on [2Fe-2S] cluster as a cofactor.

Its function is as follows. Ferredoxin are iron-sulfur proteins that transfer electrons in a wide variety of metabolic reactions. This Rickettsia felis (strain ATCC VR-1525 / URRWXCal2) (Rickettsia azadi) protein is 2Fe-2S ferredoxin (fdxB).